The sequence spans 248 residues: Probable pyridoxal 5'-phosphate synthase subunit pdx2 (248 aa).

70-72 (GES) contacts L-glutamine. Cysteine 106 acts as the Nucleophile in catalysis. Residues arginine 136 and 174–175 (IR) each bind L-glutamine. Residues histidine 221 and glutamate 223 each act as charge relay system in the active site.

The protein belongs to the glutaminase PdxT/SNO family.

The enzyme catalyses aldehydo-D-ribose 5-phosphate + D-glyceraldehyde 3-phosphate + L-glutamine = pyridoxal 5'-phosphate + L-glutamate + phosphate + 3 H2O + H(+). The catalysed reaction is L-glutamine + H2O = L-glutamate + NH4(+). Its pathway is cofactor biosynthesis; pyridoxal 5'-phosphate biosynthesis. Catalyzes the hydrolysis of glutamine to glutamate and ammonia as part of the biosynthesis of pyridoxal 5'-phosphate. The resulting ammonia molecule is channeled to the active site of pdx1. This chain is Probable pyridoxal 5'-phosphate synthase subunit pdx2, found in Dictyostelium discoideum (Social amoeba).